Here is a 356-residue protein sequence, read N- to C-terminus: Heparan sulfate 2-O-sulfotransferase 1 (356 aa).

Residues 1-11 (MGLLRIMMPPK) are Cytoplasmic-facing. The helical; Signal-anchor for type II membrane protein transmembrane segment at 12 to 28 (LQLLAVVAFAVAMLFLE) threads the bilayer. A coiled-coil region spans residues 24-51 (MLFLENQIQKLEESRSKLERAIARHEVR). Topologically, residues 29 to 356 (NQIQKLEESR…FYEKIYPKSN (328 aa)) are lumenal. 6 residues coordinate adenosine 3',5'-bisphosphate: lysine 83, threonine 84, alanine 85, serine 86, threonine 87, and serine 88. 2 N-linked (GlcNAc...) asparagine glycosylation sites follow: asparagine 108 and asparagine 127. Active-site residues include histidine 140 and histidine 142. Residues arginine 164 and serine 172 each coordinate adenosine 3',5'-bisphosphate. 2 disulfide bridges follow: cysteine 201–cysteine 209 and cysteine 222–cysteine 228. 4 residues coordinate adenosine 3',5'-bisphosphate: tyrosine 279, serine 285, threonine 290, and lysine 293.

It belongs to the sulfotransferase 3 family. In terms of assembly, homotrimer. Interacts with the C5-epimerase GLCE. N-glycosylated.

The protein localises to the golgi apparatus membrane. Catalyzes the transfer of a sulfo group from 3'-phospho-5'-adenylyl sulfate (PAPS) to the 2-OH position of iduronic acid (IdoA) or glucuronic acid (GlcA) within the heparan sulfate (HS) chain and participates in HS biosynthesis. Required for metanephric development of kidney formation, suggesting that 2-O-sulfation within HS is essential for signaling between ureteric bud and metanephric mesenchyme. This chain is Heparan sulfate 2-O-sulfotransferase 1, found in Pongo abelii (Sumatran orangutan).